A 345-amino-acid polypeptide reads, in one-letter code: Cell division control protein 2 homolog 2 (345 aa).

Residues Met1–Asp44 are disordered. Residues Tyr46 to Phe328 form the Protein kinase domain. Residues Val52 to Val60 and Lys75 contribute to the ATP site. Phosphoserine is present on Ser56. Tyr57 carries the post-translational modification Phosphotyrosine. The Proton acceptor role is filled by Asp168.

The protein belongs to the protein kinase superfamily. CMGC Ser/Thr protein kinase family. CDC2/CDKX subfamily. As to quaternary structure, forms a stable but non-covalent complex with a regulatory subunit and with a cyclin.

It carries out the reaction L-seryl-[protein] + ATP = O-phospho-L-seryl-[protein] + ADP + H(+). The catalysed reaction is L-threonyl-[protein] + ATP = O-phospho-L-threonyl-[protein] + ADP + H(+). Phosphorylation at Ser-56 or Tyr-57 inactivates the enzyme. Probably involved in the control of the cell cycle. The protein is Cell division control protein 2 homolog 2 (CRK2) of Trypanosoma brucei brucei.